Reading from the N-terminus, the 602-residue chain is MLRTHLAGSLRAEQAQQTVTLTGWVARRRDHGGVIFIDLRDASGVSQVVFREGAAAEQAHRLRAEYCVKVTGVVEVRPEGNQNFEIPTGAIEVNVTDLEVLNESAPLPFQLDDQAGEEARLKYRYLDLRREGPGHAIRLRSKVNAAARAVLAHHEFVEVETPTLTRSTPEGARDFLVPARLQPGSFYALPQSPQLFKQLLMVGGIERYYQIARCYRDEDFRADRQPEFTQLDIEMSFVNQDDVILLAEEVLSSLWKLVGHEIKTPIARMTYAEAMRRYGSDKPDLRFGVELVECAEFFKDTTFRVFQQEYVGAVVMPGGASQPRKQLDAWQEWAKQRGAKGLAYVLVGEDGTLGGPVAKNLTDTEREGLAAHVGAKPGDCIFFAAGTTKSSRALLGAARGEIARKQNLIDPDAWAFVWVVDAPLFEPTADATASGDVALGYSAWTAVHHAFTSPKPESIDTFDTDPGSALAYAYDIVCNGNEIGGGSIRIHRKDIQERVFKVMGISHEEAEEKFGFLLDAFAFGAPPHGGIAFGWDRITALLAGVDSIREVIAFPKSGGGVDPLTNAPAPITAQQRKESGVDAKPEPKGDAASAKPDAPADK.

An L-aspartate-binding site is contributed by E170. The tract at residues 194–197 (QLFK) is aspartate. Residue R216 coordinates L-aspartate. ATP is bound by residues 216–218 (RDE) and Q225. H448 is a binding site for L-aspartate. An ATP-binding site is contributed by E482. R489 contacts L-aspartate. 534 to 537 (GWDR) is an ATP binding site. The interval 559-602 (GGVDPLTNAPAPITAQQRKESGVDAKPEPKGDAASAKPDAPADK) is disordered. Residues 575–589 (QRKESGVDAKPEPKG) show a composition bias toward basic and acidic residues. Low complexity predominate over residues 590–602 (DAASAKPDAPADK).

The protein belongs to the class-II aminoacyl-tRNA synthetase family. Type 1 subfamily. In terms of assembly, homodimer.

Its subcellular location is the cytoplasm. It catalyses the reaction tRNA(Asx) + L-aspartate + ATP = L-aspartyl-tRNA(Asx) + AMP + diphosphate. Aspartyl-tRNA synthetase with relaxed tRNA specificity since it is able to aspartylate not only its cognate tRNA(Asp) but also tRNA(Asn). Reaction proceeds in two steps: L-aspartate is first activated by ATP to form Asp-AMP and then transferred to the acceptor end of tRNA(Asp/Asn). The polypeptide is Aspartate--tRNA(Asp/Asn) ligase (Rhodococcus jostii (strain RHA1)).